The sequence spans 427 residues: Enolase (427 aa).

Residue Gln162 coordinates (2R)-2-phosphoglycerate. Glu204 functions as the Proton donor in the catalytic mechanism. 3 residues coordinate Mg(2+): Asp241, Glu282, and Asp309. Residues Lys334, Arg363, Ser364, and Lys385 each coordinate (2R)-2-phosphoglycerate. The active-site Proton acceptor is Lys334.

It belongs to the enolase family. Mg(2+) is required as a cofactor.

Its subcellular location is the cytoplasm. It is found in the secreted. The protein resides in the cell surface. It carries out the reaction (2R)-2-phosphoglycerate = phosphoenolpyruvate + H2O. It participates in carbohydrate degradation; glycolysis; pyruvate from D-glyceraldehyde 3-phosphate: step 4/5. Catalyzes the reversible conversion of 2-phosphoglycerate (2-PG) into phosphoenolpyruvate (PEP). It is essential for the degradation of carbohydrates via glycolysis. This is Enolase from Frankia casuarinae (strain DSM 45818 / CECT 9043 / HFP020203 / CcI3).